The chain runs to 365 residues: MGKVHRPRRGSLGFSPRKRAKSIVPRIRSWPKETEVRMLGFAGYKAGMTHILMIDDEPGLTNGKEIFMPVTIIETPPLRVFGIRAYRMGYLGLETATEVIVPDFPLDNYPAKERKGKPKPKMTFYKLLERRIATLPKNYTQEMFEQKLGQLEDMIKEGEIVDVRAIVATQPWVIKLKKKPEVMEYAIGGTSVEEKFNYIKEKLGKELRVGEVLKEGELLDVIAVTKGKGTQGPVKRWGIKLRAHKDSKGRRKVGSIGPWHPARVMWTVPMAGQMGFHHRTELNKRLIAIGENGKLKLDENTEIEITPKGGFPHYGIVRSDFMMIAGSVPGAIKRIIRVRPAIRPPKKKPPVQRPQITYVSVESKQ.

Residues 343 to 365 (RPPKKKPPVQRPQITYVSVESKQ) are disordered. Residues 354-365 (PQITYVSVESKQ) show a composition bias toward polar residues.

Belongs to the universal ribosomal protein uL3 family. In terms of assembly, part of the 50S ribosomal subunit. Forms a cluster with proteins L14 and L24e.

Its function is as follows. One of the primary rRNA binding proteins, it binds directly near the 3'-end of the 23S rRNA, where it nucleates assembly of the 50S subunit. The polypeptide is Large ribosomal subunit protein uL3 (Pyrococcus furiosus (strain ATCC 43587 / DSM 3638 / JCM 8422 / Vc1)).